Reading from the N-terminus, the 380-residue chain is Succinyl-diaminopimelate desuccinylase (380 aa).

His-69 is a Zn(2+) binding site. Residue Asp-71 is part of the active site. Asp-102 contributes to the Zn(2+) binding site. Glu-135 (proton acceptor) is an active-site residue. Zn(2+) contacts are provided by Glu-136, Glu-164, and His-353.

This sequence belongs to the peptidase M20A family. DapE subfamily. As to quaternary structure, homodimer. Zn(2+) is required as a cofactor. Co(2+) serves as cofactor.

It carries out the reaction N-succinyl-(2S,6S)-2,6-diaminopimelate + H2O = (2S,6S)-2,6-diaminopimelate + succinate. The protein operates within amino-acid biosynthesis; L-lysine biosynthesis via DAP pathway; LL-2,6-diaminopimelate from (S)-tetrahydrodipicolinate (succinylase route): step 3/3. In terms of biological role, catalyzes the hydrolysis of N-succinyl-L,L-diaminopimelic acid (SDAP), forming succinate and LL-2,6-diaminopimelate (DAP), an intermediate involved in the bacterial biosynthesis of lysine and meso-diaminopimelic acid, an essential component of bacterial cell walls. This chain is Succinyl-diaminopimelate desuccinylase, found in Cereibacter sphaeroides (strain KD131 / KCTC 12085) (Rhodobacter sphaeroides).